The sequence spans 1276 residues: cGMP-specific 3',5'-cyclic phosphodiesterase (1276 aa).

Disordered regions lie at residues 1–76 (MHEL…TAAG), 91–185 (NQVK…QQDV), and 241–260 (ASPT…SASS). Low complexity-rich tracts occupy residues 12-47 (SSSS…SSAS) and 57-76 (TSTA…TAAG). The span at 109-124 (APYPPVPAAKPKPTPT) shows a compositional bias: pro residues. The span at 129-140 (SKFKSTSREVDV) shows a compositional bias: basic and acidic residues. A compositionally biased stretch (polar residues) spans 147–166 (ARSSTISPGVSIHTQTIQQE). 2 stretches are compositionally biased toward low complexity: residues 167–180 (SSSA…SSSS) and 249–260 (SPRSLSNSSASS). GAF domains are found at residues 290–442 (DIDV…GIGI) and 474–658 (NLEC…GLGI). The 432-residue stretch at 688-1119 (SQDQTEKLTQ…RNWQDLAEKV (432 aa)) folds into the PDEase domain. His-764 functions as the Proton donor in the catalytic mechanism. A divalent metal cation contacts are provided by His-768, His-804, Asp-805, and Asp-1023. 2 disordered regions span residues 1162 to 1193 (AQHG…TGAL) and 1205 to 1276 (LYNS…CSLL). Composition is skewed to basic and acidic residues over residues 1171 to 1180 (DDSHTPEHQR) and 1221 to 1233 (LESH…DDKS). Positions 1248-1263 (GRMSASSSTSSAGTVV) are enriched in low complexity. Residues 1266-1276 (SKKRSKLCSLL) are compositionally biased toward basic residues. Cys-1273 carries the post-translational modification Cysteine methyl ester. Cys-1273 carries the S-farnesyl cysteine lipid modification. A propeptide spans 1274–1276 (SLL) (removed in mature form).

It belongs to the cyclic nucleotide phosphodiesterase family. In terms of assembly, interacts with PrBP. Requires a divalent metal cation as cofactor.

Its subcellular location is the cell membrane. The enzyme catalyses 3',5'-cyclic GMP + H2O = GMP + H(+). In terms of biological role, has a role regulating cGMP transport in Malpighian tubule principal cells. This Drosophila persimilis (Fruit fly) protein is cGMP-specific 3',5'-cyclic phosphodiesterase.